Consider the following 363-residue polypeptide: Strychnine O-methyltransferase (363 aa).

Residues Gly-204, Asp-227, Asp-249, Met-250, and Lys-263 each coordinate S-adenosyl-L-methionine. His-267 (proton acceptor) is an active-site residue.

The protein belongs to the class I-like SAM-binding methyltransferase superfamily. Cation-independent O-methyltransferase family.

It catalyses the reaction 10-hydroxystrychnine + S-adenosyl-L-methionine = beta-colubrine + S-adenosyl-L-homocysteine + H(+). It carries out the reaction 11-demethylbrucine + S-adenosyl-L-methionine = brucine + S-adenosyl-L-homocysteine + H(+). Its pathway is alkaloid biosynthesis. In terms of biological role, O-methyltransferase involved in the biosynthesis of curare monoterpene indole alkaloids (MIAs), natural products such as strychnine, a neurotoxic compound used as a pesticide to control rodents, and its pharmacologically active derivatives, including brucine, used to regulate blood pressure. Curare alkaloids act as animal glycine receptor antagonists. Catalyzes the conversion of 10-OH strychnine to beta-colubrine, and of 11-deMe brucine to brucine. This Strychnos nux-vomica (Poison nut) protein is Strychnine O-methyltransferase.